We begin with the raw amino-acid sequence, 225 residues long: uncharacterized protein (225 aa).

The next 6 membrane-spanning stretches (helical) occupy residues 1-21, 31-51, 56-76, 88-108, 145-165, and 205-225; these read MFIG…AKKV, SPLL…NVPY, LGGG…AIPL, VEII…TALI, VTAV…PMVI, and VSMI…LSFM.

It belongs to the YohK (E.coli)/YwbG (IPA-22R) (B.subtilis) family.

It localises to the cell membrane. This is an uncharacterized protein from Bacillus subtilis (strain 168).